Consider the following 229-residue polypeptide: 2,3-bisphosphoglycerate-dependent phosphoglycerate mutase (229 aa).

Substrate contacts are provided by residues 7 to 14 (RHGQSEWN), 20 to 21 (TG), arginine 59, 86 to 89 (ERHY), lysine 97, 113 to 114 (RR), and 182 to 183 (GN). Histidine 8 serves as the catalytic Tele-phosphohistidine intermediate. Residue glutamate 86 is the Proton donor/acceptor of the active site.

Belongs to the phosphoglycerate mutase family. BPG-dependent PGAM subfamily.

It catalyses the reaction (2R)-2-phosphoglycerate = (2R)-3-phosphoglycerate. It participates in carbohydrate degradation; glycolysis; pyruvate from D-glyceraldehyde 3-phosphate: step 3/5. Catalyzes the interconversion of 2-phosphoglycerate and 3-phosphoglycerate. The sequence is that of 2,3-bisphosphoglycerate-dependent phosphoglycerate mutase from Listeria monocytogenes serotype 4a (strain HCC23).